Consider the following 266-residue polypeptide: Regulatory protein RecX (266 aa).

The protein belongs to the RecX family.

It is found in the cytoplasm. Functionally, modulates RecA activity. The chain is Regulatory protein RecX from Levilactobacillus brevis (strain ATCC 367 / BCRC 12310 / CIP 105137 / JCM 1170 / LMG 11437 / NCIMB 947 / NCTC 947) (Lactobacillus brevis).